The following is a 491-amino-acid chain: F-box protein At3g59000 (491 aa).

Positions 1-49 (MDRVGSLPDELLSHILSFLTTKEAALTSLLSKRWRYLIAFVPNLAFDDI) constitute an F-box domain.

Part of a SCF (ASK-cullin-F-box) protein ligase complex. Interacts with ASK4.

The protein localises to the nucleus. Its pathway is protein modification; protein ubiquitination. Component of SCF(ASK-cullin-F-box) E3 ubiquitin ligase complexes, which may mediate the ubiquitination and subsequent proteasomal degradation of target proteins. The chain is F-box protein At3g59000 from Arabidopsis thaliana (Mouse-ear cress).